The primary structure comprises 263 residues: Gap junction beta-6 protein (263 aa).

The Cytoplasmic portion of the chain corresponds to 1–19 (MDWGALQTILGGVNKHSTS). Residues 20–40 (IGKIWLTVLFIFRIMILVVAA) form a helical membrane-spanning segment. At 41–75 (ERVWGDEQDDFICNTLQPGCKNVCYDHFFPISHIR) the chain is on the extracellular side. Residues 76 to 96 (LWALQLIFVSTPALLVAMHVA) traverse the membrane as a helical segment. Residues 97 to 137 (YRRHEKKRQFRKGDQKCEYKDIEEIRTQRFRIEGTLWWTYT) are Cytoplasmic-facing. The helical transmembrane segment at 138–158 (CSIFFRLVFEAVFMYAFYFMY) threads the bilayer. Residues 159-189 (DGFRMPRLMKCSAWPCPNTVDCFVSRPTEKT) lie on the Extracellular side of the membrane. Residues 190–210 (VFTIFMIAVSSICILLNVAEL) traverse the membrane as a helical segment. Residues 211-263 (CYLLTKFFLRRSRKAGNQKHHPNHENKEETKQNEMNELISDSCQNTVIGFTSS) are Cytoplasmic-facing.

It belongs to the connexin family. Beta-type (group I) subfamily. As to quaternary structure, a connexon is composed of a hexamer of connexins. As to expression, exclusively expressed in the cochlea of the inner ear, where it is found in cells of the tegmentum vasculosum, cuboidal cells, supporting cells and clear cells.

The protein resides in the cell membrane. It localises to the cell junction. It is found in the gap junction. Functionally, one gap junction consists of a cluster of closely packed pairs of transmembrane channels, the connexons, through which materials of low MW diffuse from one cell to a neighboring cell. The chain is Gap junction beta-6 protein (GJB6) from Gallus gallus (Chicken).